A 181-amino-acid polypeptide reads, in one-letter code: ADP-ribosylation factor-like protein 1 (181 aa).

Residue G2 is the site of N-myristoyl glycine attachment. Residues 24–31, 45–48, G70, 126–129, and 160–161 each bind GTP; these read GLDGAGKT, TIPT, NKQD, and AT. 2 residues coordinate Mg(2+): T31 and T48.

It belongs to the small GTPase superfamily. Arf family. In terms of assembly, the GTP-bound form interacts with GOLGA1. The GTP-bound form interacts with GOLGA4 and RGPD8. The GTP-bound form directly interacts with ARFIP2. Binds to SCOC, preferentially in its GTP-bound form. May interact with UNC119. Interacts with ARFIP1; this interaction directs ARFIP1 to the trans-Golgi membranes. Interacts with ARFGEF1 (via N-terminus). As to expression, detected in heart, liver, lung and liver (at protein level). Detected in fetal heart, lung, liver and kidney. Detected in adult heart, placenta, lung, liver, skeletal muscle, kidney and pancreas.

It localises to the golgi apparatus membrane. The protein localises to the golgi apparatus. Its subcellular location is the trans-Golgi network membrane. The protein resides in the membrane. Its function is as follows. GTP-binding protein that recruits several effectors, such as golgins, arfaptins and Arf-GEFs to the trans-Golgi network, and modulates their functions at the Golgi complex. Plays thereby a role in a wide range of fundamental cellular processes, including cell polarity, innate immunity, or protein secretion mediated by arfaptins, which were shown to play a role in maintaining insulin secretion from pancreatic beta cells. This chain is ADP-ribosylation factor-like protein 1 (ARL1), found in Homo sapiens (Human).